Reading from the N-terminus, the 430-residue chain is Adenylosuccinate synthetase (430 aa).

Residues 12–18 (GDEGKGK) and 40–42 (GHT) each bind GTP. Catalysis depends on Asp13, which acts as the Proton acceptor. Residues Asp13 and Gly40 each coordinate Mg(2+). Residues 13–16 (DEGK), 38–41 (NAGH), Thr130, Arg144, Gln224, Thr239, and Arg303 each bind IMP. His41 (proton donor) is an active-site residue. Residue 299-305 (TVTGRKR) participates in substrate binding. GTP contacts are provided by residues Arg305, 331–333 (KLD), and 413–415 (STS).

Belongs to the adenylosuccinate synthetase family. As to quaternary structure, homodimer. Requires Mg(2+) as cofactor.

The protein localises to the cytoplasm. The enzyme catalyses IMP + L-aspartate + GTP = N(6)-(1,2-dicarboxyethyl)-AMP + GDP + phosphate + 2 H(+). Its pathway is purine metabolism; AMP biosynthesis via de novo pathway; AMP from IMP: step 1/2. In terms of biological role, plays an important role in the de novo pathway of purine nucleotide biosynthesis. Catalyzes the first committed step in the biosynthesis of AMP from IMP. The sequence is that of Adenylosuccinate synthetase from Methylorubrum extorquens (strain CM4 / NCIMB 13688) (Methylobacterium extorquens).